A 118-amino-acid polypeptide reads, in one-letter code: Flowering-promoting factor 1-like protein 4 (118 aa).

This sequence belongs to the FPF1 family.

This Oryza sativa subsp. japonica (Rice) protein is Flowering-promoting factor 1-like protein 4.